The sequence spans 293 residues: 4-hydroxy-tetrahydrodipicolinate synthase (293 aa).

Threonine 45 serves as a coordination point for pyruvate. Catalysis depends on tyrosine 133, which acts as the Proton donor/acceptor. The Schiff-base intermediate with substrate role is filled by lysine 161. Isoleucine 203 serves as a coordination point for pyruvate.

Belongs to the DapA family. Homotetramer; dimer of dimers.

Its subcellular location is the cytoplasm. It carries out the reaction L-aspartate 4-semialdehyde + pyruvate = (2S,4S)-4-hydroxy-2,3,4,5-tetrahydrodipicolinate + H2O + H(+). It functions in the pathway amino-acid biosynthesis; L-lysine biosynthesis via DAP pathway; (S)-tetrahydrodipicolinate from L-aspartate: step 3/4. In terms of biological role, catalyzes the condensation of (S)-aspartate-beta-semialdehyde [(S)-ASA] and pyruvate to 4-hydroxy-tetrahydrodipicolinate (HTPA). The sequence is that of 4-hydroxy-tetrahydrodipicolinate synthase from Exiguobacterium sibiricum (strain DSM 17290 / CCUG 55495 / CIP 109462 / JCM 13490 / 255-15).